An 87-amino-acid polypeptide reads, in one-letter code: Small ribosomal subunit protein bS20 (87 aa).

Positions 1–26 (MANIKSAKKRAVQSEKRRKHNASRRS) are disordered.

The protein belongs to the bacterial ribosomal protein bS20 family.

In terms of biological role, binds directly to 16S ribosomal RNA. The sequence is that of Small ribosomal subunit protein bS20 from Yersinia enterocolitica serotype O:8 / biotype 1B (strain NCTC 13174 / 8081).